Here is a 161-residue protein sequence, read N- to C-terminus: Calcium-binding protein CML24 (161 aa).

4 consecutive EF-hand domains span residues 13 to 48 (GSMD…LSPT), 49 to 84 (ASPE…GIGG), 90 to 125 (NDVS…LGEK), and 126 to 161 (CSVQ…GGGA). Residues D26, N28, D30, K32, E37, D62, D64, N66, E73, D103, D105, N107, R109, E114, D139, D141, D143, C145, and E150 each coordinate Ca(2+).

Expressed in seed coat, seedling radical, cotyledons, hypocotyl, shoot apex and elongating root. Expressed in the vasculature of cotyledons, leaves and roots. Highly expressed in guard cells, trichomes and hydathodes. Expressed in inflorescence stem branch points, silique abscission zone, young and mature styles and stigmatic papillae, mature anthers and developing seed.

Its function is as follows. Calcium-binding protein that may positively regulate abscisic acid (ABA) inhibition of germination and seedling development. May be required for photoperiod-induced flowering and function in ion homeostasis. This chain is Calcium-binding protein CML24 (CML24), found in Arabidopsis thaliana (Mouse-ear cress).